Consider the following 511-residue polypeptide: Lysine--tRNA ligase (511 aa).

Positions 1-20 (MQKNTSQPTNTNEQSNQPSL) are disordered. Residues Glu422 and Glu429 each contribute to the Mg(2+) site.

It belongs to the class-II aminoacyl-tRNA synthetase family. Homodimer. Requires Mg(2+) as cofactor.

The protein localises to the cytoplasm. It catalyses the reaction tRNA(Lys) + L-lysine + ATP = L-lysyl-tRNA(Lys) + AMP + diphosphate. This is Lysine--tRNA ligase from Chlorobium chlorochromatii (strain CaD3).